The sequence spans 279 residues: Phosphate import ATP-binding protein PstB 1 (279 aa).

In terms of domain architecture, ABC transporter spans 26–274 (VMDCKLDKIF…PREQLTSDYI (249 aa)). 59–66 (GPSGCGKS) provides a ligand contact to ATP.

Belongs to the ABC transporter superfamily. Phosphate importer (TC 3.A.1.7) family. In terms of assembly, the complex is composed of two ATP-binding proteins (PstB), two transmembrane proteins (PstC and PstA) and a solute-binding protein (PstS).

It is found in the cell inner membrane. It carries out the reaction phosphate(out) + ATP + H2O = ADP + 2 phosphate(in) + H(+). Functionally, part of the ABC transporter complex PstSACB involved in phosphate import. Responsible for energy coupling to the transport system. This is Phosphate import ATP-binding protein PstB 1 from Pseudomonas putida (strain ATCC 47054 / DSM 6125 / CFBP 8728 / NCIMB 11950 / KT2440).